Reading from the N-terminus, the 584-residue chain is Phenylalanine--tRNA ligase beta subunit (584 aa).

The B5 domain occupies 290–369 (FSVRTKTVTH…RALGFNSLEP (80 aa)). Mg(2+) is bound by residues aspartate 347, aspartate 353, aspartate 356, and aspartate 357.

Belongs to the phenylalanyl-tRNA synthetase beta subunit family. Type 2 subfamily. Tetramer of two alpha and two beta subunits. Mg(2+) serves as cofactor.

It is found in the cytoplasm. The enzyme catalyses tRNA(Phe) + L-phenylalanine + ATP = L-phenylalanyl-tRNA(Phe) + AMP + diphosphate + H(+). The protein is Phenylalanine--tRNA ligase beta subunit of Haloarcula marismortui (strain ATCC 43049 / DSM 3752 / JCM 8966 / VKM B-1809) (Halobacterium marismortui).